Here is a 361-residue protein sequence, read N- to C-terminus: Probable dual-specificity RNA methyltransferase RlmN (361 aa).

The Proton acceptor role is filled by Glu-91. The Radical SAM core domain maps to 97-329 (QHYGLSVCVT…KKKGVNCVVR (233 aa)). A disulfide bridge connects residues Cys-104 and Cys-340. [4Fe-4S] cluster contacts are provided by Cys-111, Cys-115, and Cys-118. S-adenosyl-L-methionine is bound by residues 163 to 164 (GE), Ser-195, 218 to 220 (SLH), and Asn-296. Cys-340 acts as the S-methylcysteine intermediate in catalysis.

Belongs to the radical SAM superfamily. RlmN family. [4Fe-4S] cluster serves as cofactor.

Its subcellular location is the cytoplasm. The enzyme catalyses adenosine(2503) in 23S rRNA + 2 reduced [2Fe-2S]-[ferredoxin] + 2 S-adenosyl-L-methionine = 2-methyladenosine(2503) in 23S rRNA + 5'-deoxyadenosine + L-methionine + 2 oxidized [2Fe-2S]-[ferredoxin] + S-adenosyl-L-homocysteine. It catalyses the reaction adenosine(37) in tRNA + 2 reduced [2Fe-2S]-[ferredoxin] + 2 S-adenosyl-L-methionine = 2-methyladenosine(37) in tRNA + 5'-deoxyadenosine + L-methionine + 2 oxidized [2Fe-2S]-[ferredoxin] + S-adenosyl-L-homocysteine. Specifically methylates position 2 of adenine 2503 in 23S rRNA and position 2 of adenine 37 in tRNAs. The polypeptide is Probable dual-specificity RNA methyltransferase RlmN (Streptococcus pneumoniae serotype 19F (strain G54)).